Here is a 339-residue protein sequence, read N- to C-terminus: Glyceraldehyde-3-phosphate dehydrogenase (339 aa).

NAD(+) is bound by residues 12–13 (RI), aspartate 39, arginine 84, and serine 127. D-glyceraldehyde 3-phosphate-binding positions include 157-159 (SCT), threonine 188, arginine 203, 216-217 (TG), and arginine 239. Catalysis depends on cysteine 158, which acts as the Nucleophile. Residue asparagine 320 participates in NAD(+) binding.

This sequence belongs to the glyceraldehyde-3-phosphate dehydrogenase family. Homotetramer.

It is found in the cytoplasm. The catalysed reaction is D-glyceraldehyde 3-phosphate + phosphate + NAD(+) = (2R)-3-phospho-glyceroyl phosphate + NADH + H(+). It participates in carbohydrate degradation; glycolysis; pyruvate from D-glyceraldehyde 3-phosphate: step 1/5. In terms of biological role, catalyzes the oxidative phosphorylation of glyceraldehyde 3-phosphate (G3P) to 1,3-bisphosphoglycerate (BPG) using the cofactor NAD. The first reaction step involves the formation of a hemiacetal intermediate between G3P and a cysteine residue, and this hemiacetal intermediate is then oxidized to a thioester, with concomitant reduction of NAD to NADH. The reduced NADH is then exchanged with the second NAD, and the thioester is attacked by a nucleophilic inorganic phosphate to produce BPG. The polypeptide is Glyceraldehyde-3-phosphate dehydrogenase (gap) (Mycobacterium bovis (strain ATCC BAA-935 / AF2122/97)).